We begin with the raw amino-acid sequence, 495 residues long: Cobyric acid synthase (495 aa).

Residues 252 to 440 (RPKVVVLAYP…VHGLFADDGL (189 aa)) form the GATase cobBQ-type domain. Catalysis depends on cysteine 334, which acts as the Nucleophile. Histidine 432 is a catalytic residue.

It belongs to the CobB/CobQ family. CobQ subfamily.

It functions in the pathway cofactor biosynthesis; adenosylcobalamin biosynthesis. Functionally, catalyzes amidations at positions B, D, E, and G on adenosylcobyrinic A,C-diamide. NH(2) groups are provided by glutamine, and one molecule of ATP is hydrogenolyzed for each amidation. This Bradyrhizobium sp. (strain ORS 278) protein is Cobyric acid synthase.